A 221-amino-acid chain; its full sequence is Protein-L-isoaspartate O-methyltransferase (221 aa).

The active site involves serine 57.

This sequence belongs to the methyltransferase superfamily. L-isoaspartyl/D-aspartyl protein methyltransferase family.

Its subcellular location is the cytoplasm. It carries out the reaction [protein]-L-isoaspartate + S-adenosyl-L-methionine = [protein]-L-isoaspartate alpha-methyl ester + S-adenosyl-L-homocysteine. Its function is as follows. Catalyzes the methyl esterification of L-isoaspartyl residues in peptides and proteins that result from spontaneous decomposition of normal L-aspartyl and L-asparaginyl residues. It plays a role in the repair and/or degradation of damaged proteins. The chain is Protein-L-isoaspartate O-methyltransferase from Korarchaeum cryptofilum (strain OPF8).